The sequence spans 396 residues: 8-amino-7-oxononanoate synthase (396 aa).

Arginine 19 provides a ligand contact to substrate. Position 106-107 (106-107) interacts with pyridoxal 5'-phosphate; it reads GY. Histidine 131 contributes to the substrate binding site. Pyridoxal 5'-phosphate is bound by residues serine 176, histidine 204, and threonine 233. Lysine 236 is modified (N6-(pyridoxal phosphate)lysine). A substrate-binding site is contributed by threonine 350.

Belongs to the class-II pyridoxal-phosphate-dependent aminotransferase family. BioF subfamily. Homodimer. Pyridoxal 5'-phosphate is required as a cofactor.

The catalysed reaction is 6-carboxyhexanoyl-[ACP] + L-alanine + H(+) = (8S)-8-amino-7-oxononanoate + holo-[ACP] + CO2. It functions in the pathway cofactor biosynthesis; biotin biosynthesis. Functionally, catalyzes the decarboxylative condensation of pimeloyl-[acyl-carrier protein] and L-alanine to produce 8-amino-7-oxononanoate (AON), [acyl-carrier protein], and carbon dioxide. In Pseudomonas syringae pv. tomato (strain ATCC BAA-871 / DC3000), this protein is 8-amino-7-oxononanoate synthase.